The sequence spans 424 residues: CinA-like protein (424 aa).

The protein belongs to the CinA family.

This Shewanella baltica (strain OS155 / ATCC BAA-1091) protein is CinA-like protein.